The following is a 494-amino-acid chain: Serine/threonine-protein kinase cst-1 (494 aa).

Residues 1–27 are disordered; sequence MPPSTDSSRRNSEEGFSDGFKLDSSAL. The 252-residue stretch at 35 to 286 folds into the Protein kinase domain; that stretch reads FDIVGKLGEG…ALRLCEHTFI (252 aa). ATP is bound by residues 41–49 and K64; that span reads LGEGSYGSV. Residue D154 is the Proton acceptor of the active site. A disordered region spans residues 364–413; it reads IPKSAYGSSRNNGSPRVQPPGHTASACDPSNNPPFAEEGTGPNFQIGTSE. Residues 369-378 show a composition bias toward polar residues; that stretch reads YGSSRNNGSP. Residues 443–490 enclose the SARAH domain; sequence FEFLRNITLDELIRRKESLDSEMEEEIRELQRRYKTKRQPILDVIEIK.

It belongs to the protein kinase superfamily. STE Ser/Thr protein kinase family. STE20 subfamily. It depends on Mg(2+) as a cofactor. Post-translationally, proteolytically cleaved by caspase-3 during apoptosis which results in kinase activation.

The enzyme catalyses L-seryl-[protein] + ATP = O-phospho-L-seryl-[protein] + ADP + H(+). It catalyses the reaction L-threonyl-[protein] + ATP = O-phospho-L-threonyl-[protein] + ADP + H(+). Serine/threonine-protein kinase which extends lifespan and delays tissue aging, probably by activating daf-16. The chain is Serine/threonine-protein kinase cst-1 (cst-1) from Caenorhabditis briggsae.